The sequence spans 380 residues: Cytochrome b (380 aa).

4 helical membrane-spanning segments follow: residues 33–53 (FGSL…FLAM), 77–98 (WLIR…FIHV), 113–133 (WNIG…GYVL), and 178–198 (FFAF…VHLL). Heme b-binding residues include His83 and His97. Heme b contacts are provided by His182 and His196. His201 serves as a coordination point for a ubiquinone. 4 helical membrane-spanning segments follow: residues 226–246 (IKDL…VLFF), 288–308 (LGGV…PFLN), 320–340 (ITQF…WIGG), and 347–367 (FTTI…VLMP).

This sequence belongs to the cytochrome b family. In terms of assembly, the cytochrome bc1 complex contains 11 subunits: 3 respiratory subunits (MT-CYB, CYC1 and UQCRFS1), 2 core proteins (UQCRC1 and UQCRC2) and 6 low-molecular weight proteins (UQCRH/QCR6, UQCRB/QCR7, UQCRQ/QCR8, UQCR10/QCR9, UQCR11/QCR10 and a cleavage product of UQCRFS1). This cytochrome bc1 complex then forms a dimer. The cofactor is heme b.

It is found in the mitochondrion inner membrane. Component of the ubiquinol-cytochrome c reductase complex (complex III or cytochrome b-c1 complex) that is part of the mitochondrial respiratory chain. The b-c1 complex mediates electron transfer from ubiquinol to cytochrome c. Contributes to the generation of a proton gradient across the mitochondrial membrane that is then used for ATP synthesis. In Thomasomys ischyrus (Strong-tailed oldfield mouse), this protein is Cytochrome b (MT-CYB).